We begin with the raw amino-acid sequence, 254 residues long: Imidazole glycerol phosphate synthase subunit HisF (254 aa).

Catalysis depends on residues aspartate 12 and aspartate 131.

Belongs to the HisA/HisF family. In terms of assembly, heterodimer of HisH and HisF.

The protein resides in the cytoplasm. It catalyses the reaction 5-[(5-phospho-1-deoxy-D-ribulos-1-ylimino)methylamino]-1-(5-phospho-beta-D-ribosyl)imidazole-4-carboxamide + L-glutamine = D-erythro-1-(imidazol-4-yl)glycerol 3-phosphate + 5-amino-1-(5-phospho-beta-D-ribosyl)imidazole-4-carboxamide + L-glutamate + H(+). It functions in the pathway amino-acid biosynthesis; L-histidine biosynthesis; L-histidine from 5-phospho-alpha-D-ribose 1-diphosphate: step 5/9. IGPS catalyzes the conversion of PRFAR and glutamine to IGP, AICAR and glutamate. The HisF subunit catalyzes the cyclization activity that produces IGP and AICAR from PRFAR using the ammonia provided by the HisH subunit. This chain is Imidazole glycerol phosphate synthase subunit HisF, found in Rhizorhabdus wittichii (strain DSM 6014 / CCUG 31198 / JCM 15750 / NBRC 105917 / EY 4224 / RW1) (Sphingomonas wittichii).